Here is a 64-residue protein sequence, read N- to C-terminus: Large ribosomal subunit protein bL28 (64 aa).

Belongs to the bacterial ribosomal protein bL28 family.

The polypeptide is Large ribosomal subunit protein bL28 (rpmB) (Mycobacterium leprae (strain TN)).